Reading from the N-terminus, the 617-residue chain is Dihydroxy-acid dehydratase (617 aa).

Asp82 serves as a coordination point for Mg(2+). Cys123 is a [2Fe-2S] cluster binding site. The Mg(2+) site is built by Asp124 and Lys125. Residue Lys125 is modified to N6-carboxylysine. [2Fe-2S] cluster is bound at residue Cys197. Position 497 (Glu497) interacts with Mg(2+). Residue Ser523 is the Proton acceptor of the active site.

The protein belongs to the IlvD/Edd family. Homodimer. [2Fe-2S] cluster serves as cofactor. The cofactor is Mg(2+).

The catalysed reaction is (2R)-2,3-dihydroxy-3-methylbutanoate = 3-methyl-2-oxobutanoate + H2O. It carries out the reaction (2R,3R)-2,3-dihydroxy-3-methylpentanoate = (S)-3-methyl-2-oxopentanoate + H2O. The protein operates within amino-acid biosynthesis; L-isoleucine biosynthesis; L-isoleucine from 2-oxobutanoate: step 3/4. Its pathway is amino-acid biosynthesis; L-valine biosynthesis; L-valine from pyruvate: step 3/4. In terms of biological role, functions in the biosynthesis of branched-chain amino acids. Catalyzes the dehydration of (2R,3R)-2,3-dihydroxy-3-methylpentanoate (2,3-dihydroxy-3-methylvalerate) into 2-oxo-3-methylpentanoate (2-oxo-3-methylvalerate) and of (2R)-2,3-dihydroxy-3-methylbutanoate (2,3-dihydroxyisovalerate) into 2-oxo-3-methylbutanoate (2-oxoisovalerate), the penultimate precursor to L-isoleucine and L-valine, respectively. The polypeptide is Dihydroxy-acid dehydratase (Streptomyces avermitilis (strain ATCC 31267 / DSM 46492 / JCM 5070 / NBRC 14893 / NCIMB 12804 / NRRL 8165 / MA-4680)).